Consider the following 187-residue polypeptide: Rusticyanin (187 aa).

An N-terminal signal peptide occupies residues 1-32; sequence MYTQNTMKKNWYVTVGAAAALAATVGMGTAMA. The Plastocyanin-like domain maps to 85-187; sequence SFEVHDKKNP…TGMFGKIIVK (103 aa). Residues His-117, Cys-170, His-175, and Met-180 each coordinate Cu cation.

In terms of assembly, monomer. The cofactor is Cu cation.

It is found in the periplasm. Electron carrier from cytochrome c552 to the A-type oxidase. This Acidithiobacillus ferridurans protein is Rusticyanin (rus).